Reading from the N-terminus, the 111-residue chain is Tubulin beta chain (111 aa).

The tract at residues 82–111 (SEYQQYQDATAEDEGEFDEEEAEGEGQEYA) is disordered. Residues 91 to 111 (TAEDEGEFDEEEAEGEGQEYA) show a composition bias toward acidic residues.

It belongs to the tubulin family. Dimer of alpha and beta chains. A typical microtubule is a hollow water-filled tube with an outer diameter of 25 nm and an inner diameter of 15 nM. Alpha-beta heterodimers associate head-to-tail to form protofilaments running lengthwise along the microtubule wall with the beta-tubulin subunit facing the microtubule plus end conferring a structural polarity. Microtubules usually have 13 protofilaments but different protofilament numbers can be found in some organisms and specialized cells. It depends on Mg(2+) as a cofactor.

It localises to the cytoplasm. Its subcellular location is the cytoskeleton. Its function is as follows. Tubulin is the major constituent of microtubules, a cylinder consisting of laterally associated linear protofilaments composed of alpha- and beta-tubulin heterodimers. Microtubules grow by the addition of GTP-tubulin dimers to the microtubule end, where a stabilizing cap forms. Below the cap, tubulin dimers are in GDP-bound state, owing to GTPase activity of alpha-tubulin. This chain is Tubulin beta chain, found in Lymnaea stagnalis (Great pond snail).